We begin with the raw amino-acid sequence, 321 residues long: MLFATLEHILTHISFSTISIVITIHLITLLVRELGGLRDSSEKGMIATFFCITGFLVSRWASSGHFPLSNLYESLIFLSWALYILHMIPKIQNSKNDLSTITTPSTILTQGFATSGLLTEMHQSTILVPALQSQWLMMHVSMMLLSYATLLCGSLLSAALLMIRFRKNLDFFSKKKKNVLSKTFFFNEIEYFYAKRSALKSTFFPLFPNYYKYQLIERLDSWSYRVISLGFTLLTIGILCGAVWANEAWGSYWNWDPKETWAFITWTIFAIYLHSRTNPNWKGTKSAFVASIGFLIIWICYFGINLLGIGLHSYGSFTLPI.

The next 7 helical transmembrane spans lie at 9–29 (ILTH…LITL), 44–64 (GMIA…ASSG), 68–88 (LSNL…LHMI), 143–163 (MLLS…LLMI), 226–246 (VISL…VWAN), 260–274 (TWAF…IYLH), and 289–309 (VASI…LLGI).

Belongs to the CcmF/CycK/Ccl1/NrfE/CcsA family. May interact with Ccs1.

The protein localises to the plastid. Its subcellular location is the chloroplast thylakoid membrane. Required during biogenesis of c-type cytochromes (cytochrome c6 and cytochrome f) at the step of heme attachment. The sequence is that of Cytochrome c biogenesis protein CcsA from Oryza sativa (Rice).